The chain runs to 274 residues: NH(3)-dependent NAD(+) synthetase (274 aa).

46–53 serves as a coordination point for ATP; that stretch reads GISGGQDS. Residue D52 coordinates Mg(2+). R140 lines the deamido-NAD(+) pocket. Residue T160 participates in ATP binding. E165 lines the Mg(2+) pocket. Deamido-NAD(+) is bound by residues K173 and D180. ATP contacts are provided by K189 and T211. A deamido-NAD(+)-binding site is contributed by 260-261; it reads HK.

Belongs to the NAD synthetase family. In terms of assembly, homodimer.

It carries out the reaction deamido-NAD(+) + NH4(+) + ATP = AMP + diphosphate + NAD(+) + H(+). It participates in cofactor biosynthesis; NAD(+) biosynthesis; NAD(+) from deamido-NAD(+) (ammonia route): step 1/1. Functionally, catalyzes the ATP-dependent amidation of deamido-NAD to form NAD. Uses ammonia as a nitrogen source. This is NH(3)-dependent NAD(+) synthetase from Streptococcus pneumoniae (strain 70585).